Reading from the N-terminus, the 1064-residue chain is Lethal(2) giant larvae protein homolog 1 (1064 aa).

WD repeat units lie at residues 38 to 71 (SALA…FTGL), 78 to 119 (VTQM…ALSF), 139 to 176 (VTVV…GQTL), 200 to 234 (SLQG…DHIF), 240 to 272 (LESL…GSFP), 290 to 332 (AINK…ETLV), 340 to 374 (IIDF…VLDL), 396 to 474 (TCSA…YKLS), 518 to 593 (QKVA…RVLV), 602 to 663 (TAVT…LRQS), 723 to 783 (VRCL…KEVQ), 792 to 844 (AIAV…VSAK), 849 to 902 (LTAH…VHYS), and 916 to 939 (VFTR…SLSA). Residue Ser-663 is modified to Phosphoserine. Thr-958 is subject to Phosphothreonine. Positions 966–1010 (ESPKLSQANGTPSILLAPQSLDGSPDPAHSMGPDTPEPPEAALSP) are disordered. 2 positions are modified to phosphoserine: Ser-967 and Ser-985.

This sequence belongs to the WD repeat L(2)GL family. Associated with nonmuscle myosin II heavy chain. Interacts with PRKCI/aPKC, PARD6B/Par-6 and PARD6A. Interacts with STX4A. Interacts with RAB10 (GDP-bound form); the interaction is direct and promotes RAB10 association with membranes and activation through competition with the Rab inhibitor GDI1. Interacts with DCAF1. Post-translationally, phosphorylated at least at Ser-663 by PRKCI. As to expression, expressed in brain, kidney, and muscle but is barely seen in heart and placenta. Down-regulated or lost in all cell lines and in most of the tumor samples analyzed. Loss was associated with advanced stage of the disease.

Its subcellular location is the early endosome membrane. The protein resides in the golgi apparatus. It localises to the trans-Golgi network membrane. It is found in the golgi apparatus membrane. The protein localises to the cell projection. Its subcellular location is the axon. The protein resides in the cytoplasm. It localises to the cytoskeleton. Cortical cytoskeleton protein found in a complex involved in maintaining cell polarity and epithelial integrity. Involved in the regulation of mitotic spindle orientation, proliferation, differentiation and tissue organization of neuroepithelial cells. Involved in axonogenesis through RAB10 activation thereby regulating vesicular membrane trafficking toward the axonal plasma membrane. The chain is Lethal(2) giant larvae protein homolog 1 (LLGL1) from Homo sapiens (Human).